Consider the following 339-residue polypeptide: Anthranilate phosphoribosyltransferase (339 aa).

5-phospho-alpha-D-ribose 1-diphosphate-binding positions include Gly-81, Gly-84–Asp-85, Ser-89, Asn-91–Ser-94, Lys-109–Ser-117, and Ala-121. Residue Gly-81 participates in anthranilate binding. Ser-93 is a binding site for Mg(2+). Residue Asn-112 coordinates anthranilate. Arg-167 serves as a coordination point for anthranilate. Asp-225 and Glu-226 together coordinate Mg(2+).

It belongs to the anthranilate phosphoribosyltransferase family. As to quaternary structure, homodimer. Mg(2+) is required as a cofactor.

The catalysed reaction is N-(5-phospho-beta-D-ribosyl)anthranilate + diphosphate = 5-phospho-alpha-D-ribose 1-diphosphate + anthranilate. It functions in the pathway amino-acid biosynthesis; L-tryptophan biosynthesis; L-tryptophan from chorismate: step 2/5. Functionally, catalyzes the transfer of the phosphoribosyl group of 5-phosphorylribose-1-pyrophosphate (PRPP) to anthranilate to yield N-(5'-phosphoribosyl)-anthranilate (PRA). This chain is Anthranilate phosphoribosyltransferase, found in Brucella suis (strain ATCC 23445 / NCTC 10510).